We begin with the raw amino-acid sequence, 119 residues long: Large ribosomal subunit protein bL20 (119 aa).

It belongs to the bacterial ribosomal protein bL20 family.

Binds directly to 23S ribosomal RNA and is necessary for the in vitro assembly process of the 50S ribosomal subunit. It is not involved in the protein synthesizing functions of that subunit. In Xanthomonas oryzae pv. oryzae (strain KACC10331 / KXO85), this protein is Large ribosomal subunit protein bL20.